The chain runs to 956 residues: Thrombospondin-3 (956 aa).

The N-terminal stretch at 1-21 (MEKPELWGVLALLLLCSYTCG) is a signal peptide. Residues 22–193 (SQDLQVIDLL…VESMKIILGG (172 aa)) enclose the Laminin G-like domain. Cystine bridges form between C278–C289, C283–C300, C303–C314, C320–C332, C326–C341, C344–C368, C374–C388, C382–C397, C400–C412, C418–C432, C426–C442, C444–C455, C471–C478, C483–C503, C519–C539, C542–C562, C578–C598, C601–C621, C639–C659, C679–C699, and C715–C936. The N-linked (GlcNAc...) asparagine glycan is linked to N310. The region spanning 316–354 (DINECAHADPCFPGSSCINTMPGFHCEACPPGYKGTRVS) is the EGF-like 1; calcium-binding domain. Residues 370–410 (DIDECNDGNNGGCDPNSICTNTVGSFKCGPCRLGFLGNQSQ) enclose the EGF-like 2; calcium-binding domain. N407 carries N-linked (GlcNAc...) asparagine glycosylation. The region spanning 414–456 (PARTCHSPAHSPCHIHAHCLFERNGAVSCQCNVGWAGNGNVCG) is the EGF-like 3 domain. 8 TSP type-3 repeats span residues 457–491 (PDTDIDGYPDQALPCMDNNKHCKQDNCLLTPNSGQ), 492–527 (EDADNDGVGDQCDDDADGDGIKNVEDNCRLFPNKDQ), 528–550 (QNSDTDSFGDACDNCPNVPNNDQ), 551–586 (KDTDGNGEGDACDNDVDGDGIPNGLDNCPKVPNPLQ), 587–609 (TDRDEDGVGDACDSCPEMSNPTQ), 610–647 (TDADSDLVGDVCDTNEDSDGDGHQDTKDNCPQLPNSSQ), 648–687 (LDSDNDGLGDECDGDDDNDGVPDYIPPGPDNCRLVPNPNQ), and 688–723 (KDSDGNGVGDVCEDDFDNDAVVDPLDVCPESAEVTL). Disordered regions lie at residues 518-537 (NCRLFPNKDQQNSDTDSFGD) and 546-699 (PNND…GDVC). Acidic residues predominate over residues 555-568 (GNGEGDACDNDVDG). Acidic residues predominate over residues 612 to 628 (ADSDLVGDVCDTNEDSD). An N-linked (GlcNAc...) asparagine glycan is attached at N644. Acidic residues predominate over residues 650 to 667 (SDNDGLGDECDGDDDNDG). The TSP C-terminal domain maps to 727–941 (RAYQTVILDP…LQYRCNDTVP (215 aa)). An N-linked (GlcNAc...) asparagine glycan is attached at N937.

The protein belongs to the thrombospondin family. As to quaternary structure, oligomer; disulfide-linked. In terms of tissue distribution, brain, lung and cartilage.

Its function is as follows. Adhesive glycoprotein that mediates cell-to-cell and cell-to-matrix interactions. Can bind to fibrinogen, fibronectin, laminin and type V collagen. The sequence is that of Thrombospondin-3 (Thbs3) from Mus musculus (Mouse).